The following is a 310-amino-acid chain: MAPKIFIDGEHGTTGLQIRTRMAGRRDVELLSIPEAERRNAAMREDMLNSADIAMLCLPDDASKEAVQMVSANNNVRVIDTSTAFRVNPGWAYGFAEMDKEQAEKIASARFVSNPGCYPTGAIGLIRPLRAAGILPDGYPVTVNAVSGYSGGGKQMIAQMENPDHPDAITAPHFLYGLPLTHKHVPEMTVHGLLDRAPIFSPSVGKFAQGMIVQVPLHLDDLAEGTTMESIHAALVAHYAGQEIVTVVPLSDSKALARVNAVELEGKDTMKLFVFGTPGGSQVNLVALLDNLGKGASGAAVQNMDLMLAS.

C117 is a catalytic residue.

The protein belongs to the NAGSA dehydrogenase family. Type 2 subfamily.

It localises to the cytoplasm. The enzyme catalyses N-acetyl-L-glutamate 5-semialdehyde + phosphate + NADP(+) = N-acetyl-L-glutamyl 5-phosphate + NADPH + H(+). Its pathway is amino-acid biosynthesis; L-arginine biosynthesis; N(2)-acetyl-L-ornithine from L-glutamate: step 3/4. In terms of biological role, catalyzes the NADPH-dependent reduction of N-acetyl-5-glutamyl phosphate to yield N-acetyl-L-glutamate 5-semialdehyde. In Rhizobium etli (strain ATCC 51251 / DSM 11541 / JCM 21823 / NBRC 15573 / CFN 42), this protein is N-acetyl-gamma-glutamyl-phosphate reductase.